The sequence spans 542 residues: Glucans biosynthesis protein G (542 aa).

The signal sequence occupies residues 1-34 (MVSLLRCPSSKPYSSLICSLTLGAVVALSGVAYA).

The protein belongs to the OpgD/OpgG family.

It localises to the periplasm. The protein operates within glycan metabolism; osmoregulated periplasmic glucan (OPG) biosynthesis. Functionally, involved in the biosynthesis of osmoregulated periplasmic glucans (OPGs). This chain is Glucans biosynthesis protein G, found in Shewanella baltica (strain OS155 / ATCC BAA-1091).